We begin with the raw amino-acid sequence, 849 residues long: Trehalose-phosphatase (849 aa).

Positions 1-558 are glycosyltransferase; the sequence is MPSGAQGNTQ…VKALESHMTT (558 aa).

In the N-terminal section; belongs to the glycosyltransferase 20 family. It in the C-terminal section; belongs to the trehalose phosphatase family. Mg(2+) serves as cofactor.

The protein localises to the cytoplasm. It localises to the nucleus. The enzyme catalyses alpha,alpha-trehalose 6-phosphate + H2O = alpha,alpha-trehalose + phosphate. Its pathway is carbohydrate biosynthesis. Phosphatase catalytic subunit of the trehalose synthase complex that catalyzes the production of trehalose from glucose-6-phosphate and UDP-glucose in a two step process. The sequence is that of Trehalose-phosphatase (tps2) from Schizosaccharomyces pombe (strain 972 / ATCC 24843) (Fission yeast).